We begin with the raw amino-acid sequence, 662 residues long: Glutathione hydrolase 7 (662 aa).

The Cytoplasmic segment spans residues methionine 1 to glycine 106. A phosphoserine mark is found at serine 17, serine 72, serine 79, and serine 83. Positions serine 26–lysine 90 are disordered. Over residues serine 72 to serine 83 the composition is skewed to low complexity. The helical; Signal-anchor for type II membrane protein transmembrane segment at leucine 107 to methionine 127 threads the bilayer. Over glutamine 128–leucine 662 the chain is Extracellular. 9 N-linked (GlcNAc...) asparagine glycosylation sites follow: asparagine 198, asparagine 267, asparagine 283, asparagine 330, asparagine 353, asparagine 394, asparagine 519, asparagine 523, and asparagine 586.

The protein belongs to the gamma-glutamyltransferase family. As to quaternary structure, heterodimer composed of the light and heavy chains. The active site is located in the light chain. In terms of processing, cleaved by autocatalysis into a large and a small subunit and the autocatalytic cleavage is essential to the functional activation of the enzyme.

It localises to the membrane. The catalysed reaction is an N-terminal (5-L-glutamyl)-[peptide] + an alpha-amino acid = 5-L-glutamyl amino acid + an N-terminal L-alpha-aminoacyl-[peptide]. It carries out the reaction glutathione + H2O = L-cysteinylglycine + L-glutamate. The enzyme catalyses an S-substituted glutathione + H2O = an S-substituted L-cysteinylglycine + L-glutamate. It functions in the pathway sulfur metabolism; glutathione metabolism. Functionally, hydrolyzes and transfers gamma-glutamyl moieties from glutathione and other gamma-glutamyl compounds to acceptors. The chain is Glutathione hydrolase 7 from Mus musculus (Mouse).